A 115-amino-acid polypeptide reads, in one-letter code: Putative membrane protein insertion efficiency factor (115 aa).

A disordered region spans residues 81-115 (DPRPGRCGCKDAGPAVSAGSTEGNPGRRTDGTDPD). The span at 105–115 (PGRRTDGTDPD) shows a compositional bias: basic and acidic residues.

Belongs to the UPF0161 family.

It is found in the cell inner membrane. Functionally, could be involved in insertion of integral membrane proteins into the membrane. This is Putative membrane protein insertion efficiency factor from Rhodospirillum rubrum (strain ATCC 11170 / ATH 1.1.1 / DSM 467 / LMG 4362 / NCIMB 8255 / S1).